Consider the following 467-residue polypeptide: ATP synthase subunit beta (467 aa).

Residue 153–160 participates in ATP binding; the sequence is GGAGVGKT.

This sequence belongs to the ATPase alpha/beta chains family. As to quaternary structure, F-type ATPases have 2 components, CF(1) - the catalytic core - and CF(0) - the membrane proton channel. CF(1) has five subunits: alpha(3), beta(3), gamma(1), delta(1), epsilon(1). CF(0) has three main subunits: a(1), b(2) and c(9-12). The alpha and beta chains form an alternating ring which encloses part of the gamma chain. CF(1) is attached to CF(0) by a central stalk formed by the gamma and epsilon chains, while a peripheral stalk is formed by the delta and b chains.

Its subcellular location is the cell membrane. The catalysed reaction is ATP + H2O + 4 H(+)(in) = ADP + phosphate + 5 H(+)(out). Its function is as follows. Produces ATP from ADP in the presence of a proton gradient across the membrane. The catalytic sites are hosted primarily by the beta subunits. This is ATP synthase subunit beta from Lactiplantibacillus plantarum (strain ATCC BAA-793 / NCIMB 8826 / WCFS1) (Lactobacillus plantarum).